Reading from the N-terminus, the 693-residue chain is ATP-dependent DNA helicase RecG (693 aa).

A wedge domain region spans residues 48-146; the sequence is THLYPIGELL…GDLSTPELQE (99 aa). Residues 283 to 448 form the Helicase ATP-binding domain; it reads DMALDVPMMR…AYADLDTSVI (166 aa). 296-303 serves as a coordination point for ATP; that stretch reads GDVGSGKT. The DEAH box signature appears at 397-400; sequence DEQH. Positions 482–628 constitute a Helicase C-terminal domain; that stretch reads EGRQAYWVCT…GFVIAQKDLE (147 aa).

The protein belongs to the helicase family. RecG subfamily. As to quaternary structure, monomer.

The catalysed reaction is Couples ATP hydrolysis with the unwinding of duplex DNA by translocating in the 3'-5' direction.. It catalyses the reaction ATP + H2O = ADP + phosphate + H(+). Functionally, plays a critical role in recombination and DNA repair. Helps process Holliday junction intermediates to mature products by catalyzing branch migration. Has replication fork regression activity, unwinds stalled or blocked replication forks to make a HJ that can be resolved. Has a DNA unwinding activity characteristic of a DNA helicase with 3'-5' polarity. Plays a role in recovery after DNA ADP-ribosylation. The sequence is that of ATP-dependent DNA helicase RecG from Escherichia coli O127:H6 (strain E2348/69 / EPEC).